The sequence spans 355 residues: UDP-N-acetylglucosamine--N-acetylmuramyl-(pentapeptide) pyrophosphoryl-undecaprenol N-acetylglucosamine transferase (355 aa).

UDP-N-acetyl-alpha-D-glucosamine is bound by residues 15 to 17 (TGG), Asn127, Arg163, Ser191, Ile244, 263 to 268 (ALTVSE), and Gln288.

The protein belongs to the glycosyltransferase 28 family. MurG subfamily.

Its subcellular location is the cell inner membrane. It catalyses the reaction di-trans,octa-cis-undecaprenyl diphospho-N-acetyl-alpha-D-muramoyl-L-alanyl-D-glutamyl-meso-2,6-diaminopimeloyl-D-alanyl-D-alanine + UDP-N-acetyl-alpha-D-glucosamine = di-trans,octa-cis-undecaprenyl diphospho-[N-acetyl-alpha-D-glucosaminyl-(1-&gt;4)]-N-acetyl-alpha-D-muramoyl-L-alanyl-D-glutamyl-meso-2,6-diaminopimeloyl-D-alanyl-D-alanine + UDP + H(+). Its pathway is cell wall biogenesis; peptidoglycan biosynthesis. Functionally, cell wall formation. Catalyzes the transfer of a GlcNAc subunit on undecaprenyl-pyrophosphoryl-MurNAc-pentapeptide (lipid intermediate I) to form undecaprenyl-pyrophosphoryl-MurNAc-(pentapeptide)GlcNAc (lipid intermediate II). In Salmonella arizonae (strain ATCC BAA-731 / CDC346-86 / RSK2980), this protein is UDP-N-acetylglucosamine--N-acetylmuramyl-(pentapeptide) pyrophosphoryl-undecaprenol N-acetylglucosamine transferase.